The primary structure comprises 101 residues: Small ribosomal subunit protein uS14A (101 aa).

Disordered stretches follow at residues 1-21 (MAKK…AHHA) and 49-73 (QRLP…PRGT). Composition is skewed to basic and acidic residues over residues 8-21 (AKNE…AHHA) and 61-70 (RNRDAADGRP).

The protein belongs to the universal ribosomal protein uS14 family. Part of the 30S ribosomal subunit. Contacts proteins S3 and S10.

Functionally, binds 16S rRNA, required for the assembly of 30S particles and may also be responsible for determining the conformation of the 16S rRNA at the A site. This chain is Small ribosomal subunit protein uS14A, found in Kineococcus radiotolerans (strain ATCC BAA-149 / DSM 14245 / SRS30216).